The chain runs to 140 residues: Nucleoside diphosphate kinase (140 aa).

Positions 10, 58, 86, 92, 103, and 113 each coordinate ATP. The active-site Pros-phosphohistidine intermediate is His116.

It belongs to the NDK family. Homotetramer. Mg(2+) is required as a cofactor.

It is found in the cytoplasm. The enzyme catalyses a 2'-deoxyribonucleoside 5'-diphosphate + ATP = a 2'-deoxyribonucleoside 5'-triphosphate + ADP. The catalysed reaction is a ribonucleoside 5'-diphosphate + ATP = a ribonucleoside 5'-triphosphate + ADP. Functionally, major role in the synthesis of nucleoside triphosphates other than ATP. The ATP gamma phosphate is transferred to the NDP beta phosphate via a ping-pong mechanism, using a phosphorylated active-site intermediate. The sequence is that of Nucleoside diphosphate kinase from Anaplasma phagocytophilum (strain HZ).